We begin with the raw amino-acid sequence, 166 residues long: MAPSTVAVELLSPKEKNRLRKPVVEKMRRDRINSSIEQLKLLLEQEFARHQPNSKLEKADILEMAVSYLKHSKAFVAAAGPKSLHQDYSEGYSWCLQEAVQFLTLHAASDTQMKLLYHFQRPPAAPAAPAKEPKAPGAAPPPALSAKATAAAAAAHQPACGLWRPW.

In terms of domain architecture, bHLH spans K16–S72. In terms of domain architecture, Orange spans Y88 to F119. The segment at A125–L144 is disordered. The WRPW motif signature appears at W163–W166.

As to quaternary structure, transcription repression requires formation of a complex with a corepressor protein of the Groucho/TLE family. As to expression, expressed in fetal heart and brain tumors.

The protein localises to the nucleus. Functionally, transcriptional repressor of genes that require a bHLH protein for their transcription. Plays an important role as neurogenesis negative regulator. The polypeptide is Transcription factor HES-5 (HES5) (Homo sapiens (Human)).